Reading from the N-terminus, the 365-residue chain is NADH-quinone oxidoreductase subunit D (365 aa).

Belongs to the complex I 49 kDa subunit family. NDH-1 is composed of 14 different subunits. Subunits NuoB, C, D, E, F, and G constitute the peripheral sector of the complex.

The protein localises to the cell membrane. It carries out the reaction a quinone + NADH + 5 H(+)(in) = a quinol + NAD(+) + 4 H(+)(out). Its function is as follows. NDH-1 shuttles electrons from NADH, via FMN and iron-sulfur (Fe-S) centers, to quinones in the respiratory chain. The immediate electron acceptor for the enzyme in this species is believed to be a menaquinone. Couples the redox reaction to proton translocation (for every two electrons transferred, four hydrogen ions are translocated across the cytoplasmic membrane), and thus conserves the redox energy in a proton gradient. This Carboxydothermus hydrogenoformans (strain ATCC BAA-161 / DSM 6008 / Z-2901) protein is NADH-quinone oxidoreductase subunit D.